The following is a 203-amino-acid chain: Xrcc4-like factor 1 (203 aa).

The protein belongs to the XRCC4-XLF family. XLF subfamily.

The protein localises to the nucleus. Involved in double-strand break repair via non-homologous end joining (NHEJ); the repair of a double-strand break in DNA in which the two broken ends are rejoined with little or no sequence complementarity. Has a role in meiosis. The chain is Xrcc4-like factor 1 (xlf1) from Schizosaccharomyces pombe (strain 972 / ATCC 24843) (Fission yeast).